We begin with the raw amino-acid sequence, 204 residues long: Dual-action ribosomal maturation protein DarP (204 aa).

Disordered stretches follow at residues 1–31 (MPPM…SKSQ) and 182–204 (GGAS…DDEA). Acidic residues predominate over residues 186–204 (DSDDEAADDAGDDHDDDEA).

It belongs to the DarP family.

The protein localises to the cytoplasm. In terms of biological role, member of a network of 50S ribosomal subunit biogenesis factors which assembles along the 30S-50S interface, preventing incorrect 23S rRNA structures from forming. Promotes peptidyl transferase center (PTC) maturation. The chain is Dual-action ribosomal maturation protein DarP from Burkholderia orbicola (strain MC0-3).